Reading from the N-terminus, the 473-residue chain is Heavy metal-associated isoprenylated plant protein 32 (473 aa).

The 64-residue stretch at Ile-9–Glu-72 folds into the HMA domain. Positions 20 and 23 each coordinate a metal cation. Disordered regions lie at residues Gln-96 to Gln-139, Lys-162 to Thr-230, and Ala-246 to Ser-343. The segment covering Lys-118–Asn-131 has biased composition (gly residues). The segment covering Pro-187 to Asp-217 has biased composition (acidic residues). Residues Ala-253 to Pro-339 show a composition bias toward gly residues. Cys-470 bears the Cysteine methyl ester mark. Cys-470 carries the S-farnesyl cysteine lipid modification. Positions Asp-471–Met-473 are cleaved as a propeptide — removed in mature form.

This sequence belongs to the HIPP family.

Heavy-metal-binding protein. This chain is Heavy metal-associated isoprenylated plant protein 32, found in Arabidopsis thaliana (Mouse-ear cress).